Reading from the N-terminus, the 510-residue chain is Aspartate kinase FUB3 (510 aa).

2 consecutive ACT domains span residues 372-440 (ILSN…VLPD) and 446-510 (LVGA…KNAI).

It belongs to the aspartokinase family.

The catalysed reaction is L-aspartate + ATP = 4-phospho-L-aspartate + ADP. It participates in mycotoxin biosynthesis. Aspartate kinase; part of the gene cluster that mediates the biosynthesis of fusaric acid, a mycotoxin with low to moderate toxicity to animals and humans, but with high phytotoxic properties. L-aspartate is suggested as fusaric acid amino acid precursor that is activated and further processed to O-acetyl-L-homoserine by cluster enzymes aspartate kinase FUB3 and homoserine O-acetyltransferase FUB5, as well as enzymes of the primary metabolism. The polyketide synthase (PKS) FUB1 generates the triketide trans-2-hexenal which is presumptively released by the hydrolase FUB4 and linked to the NRPS-bound amino acid precursor by NAD(P)-dependent dehydrogenase FUB6. FUB1, FUB4, and the non-canonical NRPS Fub8 may form an enzyme complex. Further processing of the NRPS-bound intermediate might be carried out by FUB6 and the sulfhydrylase FUB7, enabling a spontaneous electrocyclization to close the carbon backbone of fusaric acid. Dihydrofusaric acid is likely to be released via reduction by the thioester reductase (TR) domain of FUB8 whereupon the final oxidation to fusaric acid may (also) be performed by the FMN-dependent dehydrogenase FUB9. The sequence is that of Aspartate kinase FUB3 from Gibberella fujikuroi (strain CBS 195.34 / IMI 58289 / NRRL A-6831) (Bakanae and foot rot disease fungus).